A 555-amino-acid polypeptide reads, in one-letter code: T-complex protein 1 subunit gamma (555 aa).

The disordered stretch occupies residues K527–D555.

This sequence belongs to the TCP-1 chaperonin family. As to quaternary structure, heterooligomeric complex of about 850 to 900 kDa that forms two stacked rings, 12 to 16 nm in diameter. Interacts with CCT8.

It is found in the cytoplasm. In terms of biological role, molecular chaperone; assists the folding of proteins upon ATP hydrolysis. Known to play a role, in vitro, in the folding of actin and tubulin. This chain is T-complex protein 1 subunit gamma, found in Arabidopsis thaliana (Mouse-ear cress).